We begin with the raw amino-acid sequence, 214 residues long: Protein DEHYDRATION-INDUCED 19 homolog 5 (214 aa).

Serine 110 bears the Phosphoserine mark. The disordered stretch occupies residues 148-185 (PKKSKLVQPDSSSEASMEDNSLIRDSTEKDWESPSPLS). Polar residues predominate over residues 156 to 166 (PDSSSEASMED). Residues 168–179 (SLIRDSTEKDWE) show a composition bias toward basic and acidic residues.

Belongs to the Di19 family. Post-translationally, phosphorylated in vitro by CPK3 or CPK11. In terms of tissue distribution, expressed in seedlings, roots, leaves, stems, flowers and siliques.

It is found in the nucleus. The polypeptide is Protein DEHYDRATION-INDUCED 19 homolog 5 (DI19-5) (Arabidopsis thaliana (Mouse-ear cress)).